Reading from the N-terminus, the 155-residue chain is MPKKFYVSWDNLQREARRLARRQLPVSQWKGIIAVSRGGLVPAALMARELGIRNVETLCISSYDHNNQRDLVVVKAATTAGDGEGWLVVDDLVDTGGTAKAIRDLYPKAKFITIFAKPMGEPLVDDFEVAIPQDTWIEQPWDMALEFAHPICDEE.

Residues 37 to 38 (RG), R69, and 90 to 98 (DDLVDTGGT) each bind 5-phospho-alpha-D-ribose 1-diphosphate. GMP is bound at residue R69. A Mg(2+)-binding site is contributed by D91. The guanine site is built by D94 and I137. D94 and I137 together coordinate xanthine. GMP-binding positions include 94–98 (DTGGT) and 136–137 (WI).

The protein belongs to the purine/pyrimidine phosphoribosyltransferase family. XGPT subfamily. Homotetramer. Requires Mg(2+) as cofactor.

Its subcellular location is the cell inner membrane. The enzyme catalyses GMP + diphosphate = guanine + 5-phospho-alpha-D-ribose 1-diphosphate. It catalyses the reaction XMP + diphosphate = xanthine + 5-phospho-alpha-D-ribose 1-diphosphate. It carries out the reaction IMP + diphosphate = hypoxanthine + 5-phospho-alpha-D-ribose 1-diphosphate. It participates in purine metabolism; GMP biosynthesis via salvage pathway; GMP from guanine: step 1/1. Its pathway is purine metabolism; XMP biosynthesis via salvage pathway; XMP from xanthine: step 1/1. Functionally, purine salvage pathway enzyme that catalyzes the transfer of the ribosyl-5-phosphate group from 5-phospho-alpha-D-ribose 1-diphosphate (PRPP) to the N9 position of the 6-oxopurines guanine and xanthine to form the corresponding ribonucleotides GMP (guanosine 5'-monophosphate) and XMP (xanthosine 5'-monophosphate), with the release of PPi. To a lesser extent, also acts on hypoxanthine. In Aeromonas salmonicida (strain A449), this protein is Xanthine-guanine phosphoribosyltransferase.